The primary structure comprises 274 residues: Phosphatidylglycerol--prolipoprotein diacylglyceryl transferase (274 aa).

The next 4 helical transmembrane spans lie at 16–36 (VGLH…LSSF), 62–82 (FALG…VLFY), 94–114 (IIKI…LVIW), and 129–149 (LSVT…ALLI). Arginine 150 contributes to the a 1,2-diacyl-sn-glycero-3-phospho-(1'-sn-glycerol) binding site. Transmembrane regions (helical) follow at residues 184–204 (VQLY…WLCY), 213–233 (GYSA…AEFF), and 247–267 (LTIG…ILWI).

It belongs to the Lgt family.

The protein localises to the cell inner membrane. The enzyme catalyses L-cysteinyl-[prolipoprotein] + a 1,2-diacyl-sn-glycero-3-phospho-(1'-sn-glycerol) = an S-1,2-diacyl-sn-glyceryl-L-cysteinyl-[prolipoprotein] + sn-glycerol 1-phosphate + H(+). The protein operates within protein modification; lipoprotein biosynthesis (diacylglyceryl transfer). Its function is as follows. Catalyzes the transfer of the diacylglyceryl group from phosphatidylglycerol to the sulfhydryl group of the N-terminal cysteine of a prolipoprotein, the first step in the formation of mature lipoproteins. In Chlamydia muridarum (strain MoPn / Nigg), this protein is Phosphatidylglycerol--prolipoprotein diacylglyceryl transferase.